We begin with the raw amino-acid sequence, 504 residues long: Probable cytochrome P450 513E1 (504 aa).

The chain crosses the membrane as a helical span at residues 1-21; the sequence is MNLYISILILIISLIIFFKNN. Cys-450 lines the heme pocket.

It belongs to the cytochrome P450 family. The cofactor is heme.

It localises to the membrane. This Dictyostelium discoideum (Social amoeba) protein is Probable cytochrome P450 513E1 (cyp513E1).